We begin with the raw amino-acid sequence, 314 residues long: Ribonuclease Z (314 aa).

Zn(2+) contacts are provided by H62, H64, D66, H67, H139, D210, and H268. D66 acts as the Proton acceptor in catalysis.

Belongs to the RNase Z family. In terms of assembly, homodimer. Requires Zn(2+) as cofactor.

The enzyme catalyses Endonucleolytic cleavage of RNA, removing extra 3' nucleotides from tRNA precursor, generating 3' termini of tRNAs. A 3'-hydroxy group is left at the tRNA terminus and a 5'-phosphoryl group is left at the trailer molecule.. In terms of biological role, zinc phosphodiesterase, which displays some tRNA 3'-processing endonuclease activity. Probably involved in tRNA maturation, by removing a 3'-trailer from precursor tRNA. The protein is Ribonuclease Z of Rippkaea orientalis (strain PCC 8801 / RF-1) (Cyanothece sp. (strain PCC 8801)).